The chain runs to 108 residues: ADM5 (108 aa).

The N-terminal stretch at 1–18 (MTAHILLLWLFASSILGD) is a signal peptide. The propeptide occupies 19–25 (PDSAGRL). The cysteines at positions 38 and 43 are disulfide-linked. Residues 61–108 (KELSGKAGRKPQDPYSYGRRRRRRRRRREARLLRRLQDPSLRRAQLAG) form a disordered region. Position 77 is a tyrosine amide (Tyr77). Residues 78–89 (GRRRRRRRRRRE) show a composition bias toward basic residues. Residues 89–108 (EARLLRRLQDPSLRRAQLAG) constitute a propeptide that is removed on maturation. Residues 90 to 101 (ARLLRRLQDPSL) are compositionally biased toward basic and acidic residues.

This sequence belongs to the adrenomedullin family. Expressed abundantly in the spleen and thymus. Also expressed in adrenal and pituitary. Not expressed in brain, heart, kidney, liver and stomach.

It localises to the secreted. Seems to have a peripheral vasodepressor effect and a central vasopressor effect. In Sus scrofa (Pig), this protein is ADM5 (ADM5).